Here is a 506-residue protein sequence, read N- to C-terminus: Chromosomal replication initiator protein DnaA (506 aa).

The segment at 1–87 (MSVELWQQCV…IGSRRSSAPR (87 aa)) is domain I, interacts with DnaA modulators. Residues 87–169 (RAAPNAPVSA…QVEGALKHTS (83 aa)) form a domain II region. Residues 135–154 (DSFDAMAEPAAAPPSGGGRA) form a disordered region. The span at 139–148 (AMAEPAAAPP) shows a compositional bias: low complexity. The tract at residues 170–386 (YLNRTFTFDT…GALKRVIAHS (217 aa)) is domain III, AAA+ region. Residues Gly214, Gly216, Lys217, and Thr218 each coordinate ATP. The interval 387 to 506 (HFMGRDITIE…YKNLLRTLTT (120 aa)) is domain IV, binds dsDNA.

This sequence belongs to the DnaA family. As to quaternary structure, oligomerizes as a right-handed, spiral filament on DNA at oriC.

Its subcellular location is the cytoplasm. In terms of biological role, plays an essential role in the initiation and regulation of chromosomal replication. ATP-DnaA binds to the origin of replication (oriC) to initiate formation of the DNA replication initiation complex once per cell cycle. Binds the DnaA box (a 9 base pair repeat at the origin) and separates the double-stranded (ds)DNA. Forms a right-handed helical filament on oriC DNA; dsDNA binds to the exterior of the filament while single-stranded (ss)DNA is stabiized in the filament's interior. The ATP-DnaA-oriC complex binds and stabilizes one strand of the AT-rich DNA unwinding element (DUE), permitting loading of DNA polymerase. After initiation quickly degrades to an ADP-DnaA complex that is not apt for DNA replication. Binds acidic phospholipids. Functionally, non-cooperatively binds DnaA boxes in the minimal plasmid RK2 replication origin (oriV). In vitro in the presence of plasmid RK2-derived TrfA and E.coli protein HU, forms an open complex at oriV. This complex was not however competent for formation of a pre-priming complex with E.coli DnaB and DnaC. Broad host range plasmid RK2 requires not only DnaA for replication but also TrfA and host factors. The polypeptide is Chromosomal replication initiator protein DnaA (Pseudomonas putida (strain ATCC 47054 / DSM 6125 / CFBP 8728 / NCIMB 11950 / KT2440)).